The following is a 716-amino-acid chain: uncharacterized protein (716 aa).

2 disordered regions span residues 84-103 (SPSI…ERYP) and 153-189 (VTDE…SQGQ). The residue at position 97 (Ser-97) is a Phosphoserine. Glycyl lysine isopeptide (Lys-Gly) (interchain with G-Cter in SUMO2) cross-links involve residues Lys-201, Lys-204, Lys-237, Lys-283, and Lys-626.

This is an uncharacterized protein from Mus musculus (Mouse).